Consider the following 282-residue polypeptide: Bifunctional protein FolD (282 aa).

NADP(+)-binding positions include 165 to 167 and Ser-190; that span reads GRS.

It belongs to the tetrahydrofolate dehydrogenase/cyclohydrolase family. As to quaternary structure, homodimer.

The catalysed reaction is (6R)-5,10-methylene-5,6,7,8-tetrahydrofolate + NADP(+) = (6R)-5,10-methenyltetrahydrofolate + NADPH. It catalyses the reaction (6R)-5,10-methenyltetrahydrofolate + H2O = (6R)-10-formyltetrahydrofolate + H(+). It functions in the pathway one-carbon metabolism; tetrahydrofolate interconversion. In terms of biological role, catalyzes the oxidation of 5,10-methylenetetrahydrofolate to 5,10-methenyltetrahydrofolate and then the hydrolysis of 5,10-methenyltetrahydrofolate to 10-formyltetrahydrofolate. The sequence is that of Bifunctional protein FolD from Acinetobacter baumannii (strain ATCC 17978 / DSM 105126 / CIP 53.77 / LMG 1025 / NCDC KC755 / 5377).